Consider the following 115-residue polypeptide: Holo-[acyl-carrier-protein] synthase (115 aa).

Positions 8 and 50 each coordinate Mg(2+).

It belongs to the P-Pant transferase superfamily. AcpS family. The cofactor is Mg(2+).

It is found in the cytoplasm. It carries out the reaction apo-[ACP] + CoA = holo-[ACP] + adenosine 3',5'-bisphosphate + H(+). Functionally, transfers the 4'-phosphopantetheine moiety from coenzyme A to a Ser of acyl-carrier-protein. This is Holo-[acyl-carrier-protein] synthase from Pseudarthrobacter chlorophenolicus (strain ATCC 700700 / DSM 12829 / CIP 107037 / JCM 12360 / KCTC 9906 / NCIMB 13794 / A6) (Arthrobacter chlorophenolicus).